Consider the following 433-residue polypeptide: GTPase Der (433 aa).

EngA-type G domains follow at residues 3–167 and 175–347; these read NRVV…KEEK and IKVA…KDYT. GTP contacts are provided by residues 9-16, 56-60, 119-122, 181-188, 228-232, and 293-296; these read GRPNVGKS, DTGGL, NKID, DTAGV, and NKMD. The KH-like domain occupies 348 to 432; that stretch reads KQHKTSFVNR…PIKLVIKGRE (85 aa).

This sequence belongs to the TRAFAC class TrmE-Era-EngA-EngB-Septin-like GTPase superfamily. EngA (Der) GTPase family. Associates with the 50S ribosomal subunit.

GTPase that plays an essential role in the late steps of ribosome biogenesis. The chain is GTPase Der from Aquifex aeolicus (strain VF5).